We begin with the raw amino-acid sequence, 390 residues long: Calcium-binding and spermatid-specific protein 1 (390 aa).

3 disordered regions span residues 1 to 23, 82 to 109, and 146 to 225; these read MAED…TPTE, ASLK…KESI, and TIDA…TIPD. The segment covering 162 to 174 has biased composition (acidic residues); the sequence is ETQEDSSANDEDT. Over residues 184–193 the composition is skewed to low complexity; that stretch reads TDVSSSTSSD. Phosphoserine occurs at positions 251 and 267. Threonine 280 carries the post-translational modification Phosphothreonine; by CK2. Position 312 is a phosphoserine (serine 312). The span at 330–344 shows a compositional bias: basic and acidic residues; that stretch reads EPHVDTKNSPEKDAA. The disordered stretch occupies residues 330–390; sequence EPHVDTKNSP…LKEEPDELMM (61 aa). Serine 346, serine 356, serine 371, and serine 375 each carry phosphoserine. Over residues 346–364 the composition is skewed to polar residues; sequence SVTNVTEEFPSVTSVVEQS.

As to expression, expressed in seminiferous tubules of the testis in step 10 spermatids (stage X), subsequently increasing to reach maximal levels of step 18 elongated spermatids (stage VI) (at protein level). Strongly expressed in testis. Weakly expressed in olfactory epithelium. Expressed in spermatids of seminiferous tubules at steps 4-14 (stages IV to XIV of the seminiferous epithelium classification).

The protein resides in the cytoplasm. Its subcellular location is the mitochondrion inner membrane. The protein localises to the cell projection. It is found in the cilium. It localises to the flagellum. The protein resides in the cytoplasmic vesicle. Its subcellular location is the secretory vesicle. The protein localises to the acrosome. Functionally, calcium-binding protein. Essential for maintaining the structural integrity of the sperm flagella. This chain is Calcium-binding and spermatid-specific protein 1 (Cabs1), found in Rattus norvegicus (Rat).